We begin with the raw amino-acid sequence, 355 residues long: LIM/homeobox protein lim-4 (355 aa).

LIM zinc-binding domains follow at residues 96–155 (VICT…THVT) and 166–228 (PKCA…LVEG). The segment at residues 239-298 (TKRVRTTFAEDQLSVLQTYFNRDSNPDGADLEKIASMTGLSKRVTQVWFQNSRARQKKWH) is a DNA-binding region (homeobox). Residues 291 to 336 (RARQKKWHQKSEGDNGDSQRSSVGPSSPSQKSDSSSEMMYPTSVTT) form a disordered region. Residues 306-326 (GDSQRSSVGPSSPSQKSDSSS) show a composition bias toward low complexity.

In terms of assembly, interacts with transcription factor sox-2. As to expression, expressed in the AWB sensory neurons and in one RME motor neuron (RMEV), two RMD motor neurons (RMDL and RMDR), the RID, RIV, SAA and SIA interneurons and the SMB sensory/inter/motor neurons.

It localises to the nucleus. In terms of biological role, transcription factor that binds to the promoter of target genes. Regulates genes involved in serotonin synthesis and release in serotonergic ADF neurons. Involved in specification of neuron cell fate, olfactory receptor expression, locomotion, and foraging behavior. Required in AWB olfactory neurons to repress AWC cell fate and promote the AWB cell fate during early development. Cooperates with additional factors to direct the differentiation of the olfactory neurons, functioning with the transcription factor sox-2 to suppress AWC terminal differentiation and promote AWB neuron differentiation. Involved in regulating terminal specification and maintenance of the SMB sensory/inter/motor neurons. Plays a role in regulation of RID motor neuron differentiation, but is dispensable for motor axon outgrowth in the dorsal nerve cord. May regulate its own expression. The sequence is that of LIM/homeobox protein lim-4 from Caenorhabditis elegans.